The primary structure comprises 45 residues: MTKRTLGGTSRKRKRVSGFRVRMRTHTGRRVIRARRKKGRSQLAV.

Positions 1–27 are disordered; sequence MTKRTLGGTSRKRKRVSGFRVRMRTHT. The segment covering 10-27 has biased composition (basic residues); that stretch reads SRKRKRVSGFRVRMRTHT.

It belongs to the bacterial ribosomal protein bL34 family.

This chain is Large ribosomal subunit protein bL34, found in Prochlorococcus marinus (strain MIT 9211).